Reading from the N-terminus, the 510-residue chain is Coatomer subunit delta (510 aa).

The MHD domain maps to 270-510 (MESVHMKIEE…TFLVDKYEIL (241 aa)).

This sequence belongs to the adaptor complexes medium subunit family. Delta-COP subfamily. Oligomeric complex that consists of at least the alpha, beta, beta', gamma, delta, epsilon and zeta subunits.

The protein localises to the cytoplasm. It is found in the golgi apparatus membrane. The protein resides in the cytoplasmic vesicle. Its subcellular location is the COPI-coated vesicle membrane. Its function is as follows. The coatomer is a cytosolic protein complex that binds to dilysine motifs and reversibly associates with Golgi non-clathrin-coated vesicles, which further mediate biosynthetic protein transport from the ER, via the Golgi up to the trans Golgi network. Coatomer complex is required for budding from Golgi membranes, and is essential for the retrograde Golgi-to-ER transport of dilysine-tagged proteins. In mammals, the coatomer can only be recruited by membranes associated to ADP-ribosylation factors (ARFs), which are small GTP-binding proteins; the complex also influences the Golgi structural integrity, as well as the processing, activity, and endocytic recycling of LDL receptors. The polypeptide is Coatomer subunit delta (ARCN1) (Gallus gallus (Chicken)).